The sequence spans 188 residues: PRA1 family protein 3 (188 aa).

Met-1 carries the N-acetylmethionine modification. The Cytoplasmic portion of the chain corresponds to 1–35 (MDVNIAPLRAWDDFFPGSDRFARPDFRDISKWNNR). The next 2 helical transmembrane spans lie at 36–56 (VVSNLLYYQTNYLVVAAMMIS) and 57–77 (VVGFLSPFNMILGGIVVVLVF). At 78-93 (TGFVWAAHNKDILRRM) the chain is on the cytoplasmic side. A run of 2 helical transmembrane segments spans residues 94 to 114 (KKQYPTAFVMVVMLASYFLIS) and 115 to 135 (LFGGVMVFVFGITFPLLLMFI). The tract at residues 103–117 (MVVMLASYFLISLFG) is required for homodimer formation and heterodimer formation with ARL6IP1. Over 136–188 (HASLRLRNLKNKLENKMEEIGLKRTPMGIVLDALEQQEETITKFSDYISKMKE) the chain is Cytoplasmic. Residues 136–188 (HASLRLRNLKNKLENKMEEIGLKRTPMGIVLDALEQQEETITKFSDYISKMKE) are targeting to endoplasmic reticulum membrane.

This sequence belongs to the PRA1 family. Homodimer. Heterodimer with ARL6IP1. Forms multimers. Interacts with ARL6. Interacts with prenylated RAB1A and RAB3A. Interacts with SLC1A1/EAAC1. Interacts with RTN2 (via first transmembrane domain). Does not interact with VAMP1, VAMP2 or VAMP3.

Its subcellular location is the endoplasmic reticulum membrane. It is found in the cell membrane. The protein localises to the cytoplasm. It localises to the cytoskeleton. In terms of biological role, regulates intracellular concentrations of taurine and glutamate. Negatively modulates SLC1A1/EAAC1 glutamate transport activity by decreasing its affinity for glutamate in a PKC activity-dependent manner. Plays a role in the retention of SLC1A1/EAAC1 in the endoplasmic reticulum. The protein is PRA1 family protein 3 (ARL6IP5) of Bos taurus (Bovine).